A 442-amino-acid chain; its full sequence is MRVLRACLSLCVLVVSDSKGSHELHQESGASNCGCLNGGKCVSYKYFSNIQRCSCPKKFQGEHCEIDTSQTCFEGNGHSYRGKANTNTGGRPCLPWNSATVLLNTYHAHRPDALQLGLGKHNYCRNPDNQRRPWCYVQVGLKQLVQECMVPNCSGGESHRPAYDGKNPFSTPEKVEFQCGQKALRPRFKIVGGKSTTIENQPWFAAIYRRHRGGSVTYVCGGSLISPCWVVSATHCFINYQQKEDYIVYLGRQTLHSSTHGEMKFEVEKLILHEDYSADSLAHHNDIALLKIRTDKGQCAQPSRSIQTICLPPVNGDAHFGASCEIVGFGKEDPSDYLYPEQLKMTVVKLVSHRECQQPHYYGSEVTTKMLCAADPQWKTDSCQGDSGGPLVCSTQGRLTLTGIVSWGRECAMKDKPGVYTRVSRFLTWIHTHVGGENGLAH.

The signal sequence occupies residues 1 to 20 (MRVLRACLSLCVLVVSDSKG). The region spanning 29 to 65 (GASNCGCLNGGKCVSYKYFSNIQRCSCPKKFQGEHCE) is the EGF-like domain. Cystine bridges form between Cys33–Cys41, Cys35–Cys53, Cys55–Cys64, Cys72–Cys153, Cys93–Cys135, Cys124–Cys148, Cys179–Cys310, Cys220–Cys236, Cys228–Cys299, Cys324–Cys393, Cys356–Cys372, and Cys383–Cys411. The interval 36 to 59 (LNGGKCVSYKYFSNIQRCSCPKKF) is binds urokinase plasminogen activator surface receptor. A Kringle domain is found at 72–153 (CFEGNGHSYR…LVQECMVPNC (82 aa)). N-linked (GlcNAc...) asparagine glycosylation occurs at Asn152. The tract at residues 154 to 189 (SGGESHRPAYDGKNPFSTPEKVEFQCGQKALRPRFK) is connecting peptide. Residues 190-435 (IVGGKSTTIE…FLTWIHTHVG (246 aa)) enclose the Peptidase S1 domain. Residues His235 and Asp286 each act as charge relay system in the active site. The Charge relay system role is filled by Ser387.

Belongs to the peptidase S1 family. As to quaternary structure, found in high and low molecular mass forms. Each consists of two chains, A and B. The high molecular mass form contains a long chain A which is cleaved to yield a short chain A. Forms heterodimer with SERPINA5. Binds LRP1B; binding is followed by internalization and degradation. Interacts with MRC2. Interacts with PLAUR. In complex with SERPINE1, interacts with PLAUR/uPAR. Interacts with SORL1 and LRP1, either alone or in complex with SERPINE1; these interactions are abolished in the presence of LRPAP1/RAP. The ternary complex composed of PLAUR-PLAU-PAI1 also interacts with SORLA. Produced as an inactive single-chain protein (pro-uPA or sc-uPA), is processed into the active disulfide-linked two-chain form of PLAU/uPA by a proteolytic event mediated, at least, by TMPRSS4.

The protein localises to the secreted. The catalysed reaction is Specific cleavage of Arg-|-Val bond in plasminogen to form plasmin.. With respect to regulation, inhibited by SERPINA5. Inhibited by SERPINE1. Functionally, specifically cleaves the zymogen plasminogen to form the active enzyme plasmin. The polypeptide is Urokinase-type plasminogen activator (PLAU) (Sus scrofa (Pig)).